Reading from the N-terminus, the 123-residue chain is Defensin beta 118 (123 aa).

Residues M1–P19 form the signal peptide. 3 disulfide bridges follow: C27–C54, C34–C48, and C38–C55. Disordered stretches follow at residues N59–G79 and M102–S123. Residues Q64 to S123 constitute a propeptide that is removed on maturation. The span at P66 to G79 shows a compositional bias: low complexity.

Belongs to the beta-defensin family. The three-dimensional structure formed by the three intramolecular disulfide bridges is indispensable for antimicrobial activity.

The protein resides in the secreted. Functionally, host defense peptide that exhibits antimicrobial activity against both Gram-negative bacteria, such as E.coli and S.typhimurium, and Gram-positive bacteria, such as S.aureus and B.subtilis. Inhibits cell adhesion of E.coli on intestinal epithelial enterocytes. Causes rapid permeabilization of both the outer and inner membrane of E.coli, leading to morphological alterations on the bacterial surface. Binds to bacterial lipopolysaccharides (LPS) with high affinity, and may thereby be involved in immunoregulation through LPS neutralization. May contribute to epididymal innate immunity and protect the sperm against attack by microorganisms. The polypeptide is Defensin beta 118 (DEFB118) (Hylobates lar (Lar gibbon)).